The sequence spans 905 residues: Sun domain-containing protein 1 (905 aa).

Disordered stretches follow at residues 1-21 (MSGD…LPLQ), 41-166 (NNTV…ILKQ), and 207-242 (QQQQ…IDNN). Over 1–290 (MSGDYKPNYQ…NNNNKVNFKQ (290 aa)) the chain is Nuclear. Low complexity-rich tracts occupy residues 41-67 (NNTV…SSYL) and 75-101 (SNQI…ASSS). The span at 107 to 116 (KVDHNSHNNN) shows a compositional bias: basic and acidic residues. Residues 117–126 (DDDDIEDDVD) show a composition bias toward acidic residues. Polar residues predominate over residues 129–146 (YSTNNASSNILHNRFSNS). Residues 170-221 (LYNHLNNQIQQQQQQQQQQQQQQQQQQQQQQQQQQQQQQQQQQQRNNNNNSN) adopt a coiled-coil conformation. Residues 207 to 227 (QQQQQQQRNNNNNSNSSNNNN) are compositionally biased toward low complexity. Residues 291–311 (AIWIFIFSVLFIGCLLGLFST) traverse the membrane as a helical segment. Topologically, residues 312–905 (NFYGIHIYFP…IEKQQQSDEL (594 aa)) are perinuclear space. 2 coiled-coil regions span residues 359-456 (KKNE…QLIQ) and 504-609 (REFN…TQQF). Residues 662–860 (GASIEYNALH…YRFRVHGYQI (199 aa)) form the SUN domain. The stretch at 864 to 901 (EQEQIQIIQEEQSFKQEEINQQQIEQIEQIEQIEKQQQ) forms a coiled coil.

As to quaternary structure, homodimer and homooligomer.

Its subcellular location is the nucleus membrane. May have an important role in defining the spacing of the nuclear envelope lumen. Essential for centrosome attachment to the nucleus, maintenance of correct ploidy, proper mitosis, association of the centromere cluster with the centrosome and the maintenance of genome stability. Requires direct chromatin binding for inner nuclear membrane targeting. The chain is Sun domain-containing protein 1 (sun1) from Dictyostelium discoideum (Social amoeba).